The following is a 124-amino-acid chain: UPF0102 protein Msil_0293 (124 aa).

The protein belongs to the UPF0102 family.

In Methylocella silvestris (strain DSM 15510 / CIP 108128 / LMG 27833 / NCIMB 13906 / BL2), this protein is UPF0102 protein Msil_0293.